Consider the following 224-residue polypeptide: Ras-related protein RABA4b (224 aa).

Residue alanine 2 is modified to N-acetylalanine. Residue 24 to 31 (GDSAVGKS) coordinates GTP. The Effector region signature appears at 46–54 (SKATIGVEF). GTP is bound by residues 72–76 (DTAGQ), 130–133 (NKSD), and 160–161 (SA). S-geranylgeranyl cysteine attachment occurs at residues cysteine 220 and cysteine 221.

The protein belongs to the small GTPase superfamily. Rab family. Interacts with TCTP1. Expressed in roots, stems, leaves and flowers. Expressed in tips of growing root hair cells.

The protein localises to the early endosome membrane. It is found in the golgi apparatus. Its subcellular location is the trans-Golgi network membrane. Regulator of membrane trafficking. May be required for secretion of cell wall components in cells. The polypeptide is Ras-related protein RABA4b (Arabidopsis thaliana (Mouse-ear cress)).